The sequence spans 305 residues: Superkiller complex protein 8 (305 aa).

7 WD repeats span residues 14 to 57 (AHED…LELQ), 62 to 101 (GHQLGVVSVNISQNGAIAASSSLDAHIRLWDLETGKQIKS), 104 to 143 (AGPVDAWTVAFSPDSKYIATGSHLGKVNIFGVESGKKEHS), 146 to 187 (TRGK…HTLE), 188 to 227 (GHAMPIRSLTFSPDSQLLVTASDDGYIKIYDVQHANLAGT), 230 to 269 (GHGSWVLSVAFSPDDTHFVSSSSDKSIKVWDTSSRSCVNT), and 272 to 305 (DHQDQVWSVKYNPTGSKIVSAGDDRAIHIYDCPM).

The protein belongs to the SKI8 family. In terms of assembly, component of the PAF1 complex. Component of the SKI complex.

The protein resides in the nucleus. Its subcellular location is the cytoplasm. Its function is as follows. Component of the PAF1 complex (PAF1C) which has multiple functions during transcription by RNA polymerase II and is implicated in regulation of development and maintenance of embryonic stem cell pluripotency. PAF1C associates with RNA polymerase II through interaction with POLR2A CTD non-phosphorylated and 'Ser-2'- and 'Ser-5'-phosphorylated forms and is involved in transcriptional elongation, acting both independently and synergistically with TCEA1 and in cooperation with the DSIF complex and HTATSF1. Also acts as a component of the SKI complex, a multiprotein complex that assists the RNA-degrading exosome during the mRNA decay and quality-control pathways. The SKI complex catalyzes mRNA extraction from 80S ribosomal complexes in the 3'-5' direction and channels mRNA to the cytosolic exosome for degradation. The sequence is that of Superkiller complex protein 8 (skic8) from Danio rerio (Zebrafish).